We begin with the raw amino-acid sequence, 630 residues long: Putative polypeptide N-acetylgalactosaminyltransferase 10 (630 aa).

Residues 1–6 (MNVDLR) lie on the Cytoplasmic side of the membrane. Residues 7-26 (LIVRLLLAILLTSLVTTILM) traverse the membrane as a helical; Signal-anchor for type II membrane protein segment. Residues 27–630 (GKQIHRRLVK…APYDPQREPH (604 aa)) are Lumenal-facing. N-linked (GlcNAc...) asparagine glycans are attached at residues Asn-72, Asn-84, Asn-146, and Asn-168. Cystine bridges form between Cys-157–Cys-386, Cys-377–Cys-456, and Cys-496–Cys-513. Residues 166–277 (LPNVTVIIAF…TNWLPPLLEP (112 aa)) form a catalytic subdomain A region. Positions 207 and 238 each coordinate substrate. Residue Asp-261 participates in Mn(2+) binding. Residue Ser-262 coordinates substrate. His-263 contributes to the Mn(2+) binding site. Residues 333-394 (PYRTPVLSGA…PCARVGHIGK (62 aa)) are catalytic subdomain B. Trp-363 provides a ligand contact to substrate. His-391 is a binding site for Mn(2+). Residues 483-618 (FSGVIESVAF…NQLEQQWKVG (136 aa)) form the Ricin B-type lectin domain. An N-linked (GlcNAc...) asparagine glycan is attached at Asn-525. Disulfide bonds link Cys-543–Cys-559 and Cys-586–Cys-606.

Belongs to the glycosyltransferase 2 family. GalNAc-T subfamily. Requires Mn(2+) as cofactor. In terms of tissue distribution, during embryonic stages 9-11, weakly expressed in the mesoderm. During embryonic stages 12-13, very weak expression is observed in the somatic mesoderm region. No expression detected from stage 14-15. During embryonic stages 16-17, expressed in the epidermis and the antennomaxillary complex. In third instar larvae, expressed ubiquitously in wing, eye-antennal, leg and haltere imaginal disks.

It localises to the golgi apparatus membrane. It catalyses the reaction L-seryl-[protein] + UDP-N-acetyl-alpha-D-galactosamine = a 3-O-[N-acetyl-alpha-D-galactosaminyl]-L-seryl-[protein] + UDP + H(+). The catalysed reaction is L-threonyl-[protein] + UDP-N-acetyl-alpha-D-galactosamine = a 3-O-[N-acetyl-alpha-D-galactosaminyl]-L-threonyl-[protein] + UDP + H(+). It functions in the pathway protein modification; protein glycosylation. May catalyze the initial reaction in O-linked oligosaccharide biosynthesis, the transfer of an N-acetyl-D-galactosamine residue to a serine or threonine residue on the protein receptor. The sequence is that of Putative polypeptide N-acetylgalactosaminyltransferase 10 (pgant10) from Drosophila melanogaster (Fruit fly).